The chain runs to 453 residues: Bifunctional protein GlmU (453 aa).

Residues 1–226 (MFAIAILAAG…IDEVSGVNDR (226 aa)) are pyrophosphorylase. UDP-N-acetyl-alpha-D-glucosamine is bound by residues 7–10 (LAAG), lysine 21, glutamine 73, and 78–79 (GT). Residue aspartate 103 coordinates Mg(2+). Glycine 140, glutamate 155, asparagine 170, and asparagine 224 together coordinate UDP-N-acetyl-alpha-D-glucosamine. Asparagine 224 is a Mg(2+) binding site. The linker stretch occupies residues 227–247 (AQLANCENLIQQSLRNHWMSK). The tract at residues 248 to 453 (GVSFIDPESC…NWKTREETNQ (206 aa)) is N-acetyltransferase. UDP-N-acetyl-alpha-D-glucosamine contacts are provided by arginine 329 and lysine 347. The active-site Proton acceptor is the histidine 359. Residues tyrosine 362 and asparagine 373 each coordinate UDP-N-acetyl-alpha-D-glucosamine. 3 residues coordinate acetyl-CoA: alanine 376, alanine 419, and arginine 436.

In the N-terminal section; belongs to the N-acetylglucosamine-1-phosphate uridyltransferase family. This sequence in the C-terminal section; belongs to the transferase hexapeptide repeat family. Homotrimer. It depends on Mg(2+) as a cofactor.

The protein resides in the cytoplasm. It carries out the reaction alpha-D-glucosamine 1-phosphate + acetyl-CoA = N-acetyl-alpha-D-glucosamine 1-phosphate + CoA + H(+). The enzyme catalyses N-acetyl-alpha-D-glucosamine 1-phosphate + UTP + H(+) = UDP-N-acetyl-alpha-D-glucosamine + diphosphate. Its pathway is nucleotide-sugar biosynthesis; UDP-N-acetyl-alpha-D-glucosamine biosynthesis; N-acetyl-alpha-D-glucosamine 1-phosphate from alpha-D-glucosamine 6-phosphate (route II): step 2/2. It functions in the pathway nucleotide-sugar biosynthesis; UDP-N-acetyl-alpha-D-glucosamine biosynthesis; UDP-N-acetyl-alpha-D-glucosamine from N-acetyl-alpha-D-glucosamine 1-phosphate: step 1/1. It participates in bacterial outer membrane biogenesis; LPS lipid A biosynthesis. Functionally, catalyzes the last two sequential reactions in the de novo biosynthetic pathway for UDP-N-acetylglucosamine (UDP-GlcNAc). The C-terminal domain catalyzes the transfer of acetyl group from acetyl coenzyme A to glucosamine-1-phosphate (GlcN-1-P) to produce N-acetylglucosamine-1-phosphate (GlcNAc-1-P), which is converted into UDP-GlcNAc by the transfer of uridine 5-monophosphate (from uridine 5-triphosphate), a reaction catalyzed by the N-terminal domain. This chain is Bifunctional protein GlmU, found in Prochlorococcus marinus (strain MIT 9211).